The primary structure comprises 330 residues: 4-hydroxythreonine-4-phosphate dehydrogenase (330 aa).

2 residues coordinate substrate: H135 and T136. Residues H165, H210, and H266 each coordinate a divalent metal cation. The substrate site is built by K274, N283, and R292.

Belongs to the PdxA family. In terms of assembly, homodimer. Requires Zn(2+) as cofactor. Mg(2+) is required as a cofactor. Co(2+) serves as cofactor.

It localises to the cytoplasm. It catalyses the reaction 4-(phosphooxy)-L-threonine + NAD(+) = 3-amino-2-oxopropyl phosphate + CO2 + NADH. It functions in the pathway cofactor biosynthesis; pyridoxine 5'-phosphate biosynthesis; pyridoxine 5'-phosphate from D-erythrose 4-phosphate: step 4/5. Functionally, catalyzes the NAD(P)-dependent oxidation of 4-(phosphooxy)-L-threonine (HTP) into 2-amino-3-oxo-4-(phosphooxy)butyric acid which spontaneously decarboxylates to form 3-amino-2-oxopropyl phosphate (AHAP). The polypeptide is 4-hydroxythreonine-4-phosphate dehydrogenase (Vibrio cholerae serotype O1 (strain ATCC 39315 / El Tor Inaba N16961)).